A 292-amino-acid polypeptide reads, in one-letter code: Pantothenate synthetase (292 aa).

30–37 (MGALHEGH) provides a ligand contact to ATP. Histidine 37 functions as the Proton donor in the catalytic mechanism. (R)-pantoate is bound at residue glutamine 61. Glutamine 61 contributes to the beta-alanine binding site. 147–150 (GEKD) lines the ATP pocket. Glutamine 153 serves as a coordination point for (R)-pantoate. 184 to 187 (VSSR) is an ATP binding site.

Belongs to the pantothenate synthetase family. As to quaternary structure, homodimer.

Its subcellular location is the cytoplasm. The enzyme catalyses (R)-pantoate + beta-alanine + ATP = (R)-pantothenate + AMP + diphosphate + H(+). The protein operates within cofactor biosynthesis; (R)-pantothenate biosynthesis; (R)-pantothenate from (R)-pantoate and beta-alanine: step 1/1. In terms of biological role, catalyzes the condensation of pantoate with beta-alanine in an ATP-dependent reaction via a pantoyl-adenylate intermediate. The sequence is that of Pantothenate synthetase from Chlorobium phaeovibrioides (strain DSM 265 / 1930) (Prosthecochloris vibrioformis (strain DSM 265)).